A 331-amino-acid chain; its full sequence is ADP-L-glycero-D-manno-heptose-6-epimerase (331 aa).

Residues 11–12 (FI), 32–33 (DN), Lys-39, Lys-54, 75–79 (EGACS), and Asn-92 each bind NADP(+). Tyr-139 serves as the catalytic Proton acceptor. Lys-143 is a binding site for NADP(+). Asn-168 serves as a coordination point for substrate. 2 residues coordinate NADP(+): Val-169 and Lys-177. Catalysis depends on Lys-177, which acts as the Proton acceptor. Residues Arg-179, His-186, 200 to 203 (FGEY), Arg-213, and Tyr-292 each bind substrate.

The protein belongs to the NAD(P)-dependent epimerase/dehydratase family. HldD subfamily. Homopentamer. The cofactor is NADP(+).

The enzyme catalyses ADP-D-glycero-beta-D-manno-heptose = ADP-L-glycero-beta-D-manno-heptose. It participates in nucleotide-sugar biosynthesis; ADP-L-glycero-beta-D-manno-heptose biosynthesis; ADP-L-glycero-beta-D-manno-heptose from D-glycero-beta-D-manno-heptose 7-phosphate: step 4/4. Functionally, catalyzes the interconversion between ADP-D-glycero-beta-D-manno-heptose and ADP-L-glycero-beta-D-manno-heptose via an epimerization at carbon 6 of the heptose. The chain is ADP-L-glycero-D-manno-heptose-6-epimerase from Ralstonia nicotianae (strain ATCC BAA-1114 / GMI1000) (Ralstonia solanacearum).